Consider the following 63-residue polypeptide: MPKNKSHSGASRRFRVTGTGKIMRRRTNKNHLLEHKPSKRTRRLSVDVRVSPADARKIRKLLG.

It belongs to the bacterial ribosomal protein bL35 family.

This chain is Large ribosomal subunit protein bL35, found in Thermobifida fusca (strain YX).